The following is a 395-amino-acid chain: 1-deoxy-D-xylulose 5-phosphate reductoisomerase (395 aa).

Residues threonine 10, glycine 11, serine 12, isoleucine 13, asparagine 38, and asparagine 123 each contribute to the NADPH site. Residue lysine 124 participates in 1-deoxy-D-xylulose 5-phosphate binding. NADPH is bound at residue glutamate 125. Mn(2+) is bound at residue aspartate 149. Residues serine 150, glutamate 151, serine 185, and histidine 208 each coordinate 1-deoxy-D-xylulose 5-phosphate. Glutamate 151 lines the Mn(2+) pocket. Glycine 214 is a binding site for NADPH. Positions 221, 226, 227, and 230 each coordinate 1-deoxy-D-xylulose 5-phosphate. Glutamate 230 provides a ligand contact to Mn(2+).

The protein belongs to the DXR family. Mg(2+) is required as a cofactor. Requires Mn(2+) as cofactor.

The catalysed reaction is 2-C-methyl-D-erythritol 4-phosphate + NADP(+) = 1-deoxy-D-xylulose 5-phosphate + NADPH + H(+). The protein operates within isoprenoid biosynthesis; isopentenyl diphosphate biosynthesis via DXP pathway; isopentenyl diphosphate from 1-deoxy-D-xylulose 5-phosphate: step 1/6. Catalyzes the NADPH-dependent rearrangement and reduction of 1-deoxy-D-xylulose-5-phosphate (DXP) to 2-C-methyl-D-erythritol 4-phosphate (MEP). The sequence is that of 1-deoxy-D-xylulose 5-phosphate reductoisomerase from Shewanella woodyi (strain ATCC 51908 / MS32).